The chain runs to 471 residues: V-type ATP synthase beta chain (471 aa).

It belongs to the ATPase alpha/beta chains family.

In terms of biological role, produces ATP from ADP in the presence of a proton gradient across the membrane. The V-type beta chain is a regulatory subunit. The sequence is that of V-type ATP synthase beta chain (atpB) from Deinococcus radiodurans (strain ATCC 13939 / DSM 20539 / JCM 16871 / CCUG 27074 / LMG 4051 / NBRC 15346 / NCIMB 9279 / VKM B-1422 / R1).